A 627-amino-acid chain; its full sequence is Hemocyanin B chain (627 aa).

His-173, His-177, and His-204 together coordinate Cu cation. N-linked (GlcNAc...) asparagine glycosylation is found at Asn-312 and Asn-316. Cu cation-binding residues include His-324, His-328, and His-364. An intrachain disulfide couples Cys-534 to Cys-582.

The protein belongs to the tyrosinase family. Hemocyanin subfamily. As to quaternary structure, tarantula hemocyanin is a 24-chain polymer with seven different chains identified. As to expression, hemolymph.

Its subcellular location is the secreted. It localises to the extracellular space. Its function is as follows. Hemocyanins are copper-containing oxygen carriers occurring freely dissolved in the hemolymph of many mollusks and arthropods. The sequence is that of Hemocyanin B chain (HCB) from Aphonopelma sp. (American tarantula).